The primary structure comprises 197 residues: Large ribosomal subunit protein eL15 (197 aa).

Composition is skewed to basic residues over residues 70-90, 163-179, and 187-197; these read PKGG…RMGK, RGKT…RKRG, and PSLRAHRRRGK. Disordered stretches follow at residues 70–99 and 163–197; these read PKGG…GKSK and RGKT…RRGK.

This sequence belongs to the eukaryotic ribosomal protein eL15 family.

The protein is Large ribosomal subunit protein eL15 of Methanopyrus kandleri (strain AV19 / DSM 6324 / JCM 9639 / NBRC 100938).